The chain runs to 2201 residues: Tenascin (2201 aa).

The signal sequence occupies residues 1–22 (MGAMTQLLAGVFLAFLALATEG). Residue N38 is glycosylated (N-linked (GlcNAc...) asparagine). Residues S65 and S70 each carry the phosphoserine modification. S72 carries the post-translational modification Phosphoserine; by FAM20C. O-linked (Xyl...) (chondroitin sulfate) serine glycosylation occurs at S72. Residues 118 to 145 (DVKELLSRLEELENLVSSLREQCTAGAG) are a coiled coil. N-linked (GlcNAc...) asparagine glycosylation is found at N166 and N184. The EGF-like 1; incomplete domain occupies 174–186 (CVCEPGWKGPNCS). 14 consecutive EGF-like domains span residues 186-217 (SEPECPGNCHLRGRCIDGQCICDDGFTGEDCS), 217-248 (SQLACPSDCNDQGKCVNGVCICFEGYAGADCS), 248-280 (SREICPVPCSEEHGTCVDGLCVCHDGFAGDDCN), 280-311 (NKPLCLNNCYNRGRCVENECVCDEGFTGEDCS), 311-342 (SELICPNDCFDRGRCINGTCYCEEGFTGEDCG), 342-373 (GKPTCPHACHTQGRCEEGQCVCDEGFAGVDCS), 373-404 (SEKRCPADCHNRGRCVDGRCECDDGFTGADCG), 404-435 (GELKCPNGCSGHGRCVNGQCVCDEGYTGEDCS), 435-466 (SQLRCPNDCHSRGRCVEGKCVCEQGFKGYDCS), 466-497 (SDMSCPNDCHQHGRCVNGMCVCDDGYTGEDCR), 497-528 (RDRQCPRDCSNRGLCVDGQCVCEDGFTGPDCA), 528-559 (AELSCPNDCHGQGRCVNGQCVCHEGFMGKDCK), 559-590 (KEQRCPSDCHGQGRCVDGQCICHEGFTGLDCG), and 590-621 (GQHSCPSDCNNLGQCVSGRCICNEGYSGEDCS). 42 disulfide bridges follow: C190–C200, C194–C205, C207–C216, C221–C231, C225–C236, C238–C247, C252–C263, C256–C268, C270–C279, C284–C294, C288–C299, C301–C310, C315–C325, C319–C330, C332–C341, C346–C356, C350–C361, C363–C372, C377–C387, C381–C392, C394–C403, C408–C418, C412–C423, C425–C434, C439–C449, C443–C454, C456–C465, C470–C480, C474–C485, C487–C496, C501–C511, C505–C516, C518–C527, C532–C542, C536–C547, C549–C558, C563–C573, C567–C578, C580–C589, C594–C604, C598–C609, and C611–C620. An N-linked (GlcNAc...) asparagine glycan is attached at N327. Fibronectin type-III domains follow at residues 625-715 (PPKD…LPAP), 716-804 (EGLK…TRLD), 805-894 (APSQ…TGLD), 895-990 (APRN…TPKD), 991-1075 (LQVS…EQAP), 1076-1165 (ELEN…TGET), 1167-1256 (NLGE…TEEV), 1258-1350 (DMGN…LPQL), 1351-1439 (GDLA…AKEP), 1440-1531 (EIGN…ALPL), 1533-1621 (ENLT…EAEP), 1622-1711 (EVDN…TAMG), 1712-1801 (SPKE…ALDG), 1802-1888 (PSGL…TDLD), and 1889-1977 (SPRD…IGLL). A glycan (N-linked (GlcNAc...) asparagine) is linked at N788. Residue T905 is modified to Phosphothreonine. Residues N1018, N1034, N1079, N1093, N1119, N1184, N1210, N1261, N1275, N1301, N1366, N1392, N1445, N1455, N1485, and N1534 are each glycosylated (N-linked (GlcNAc...) asparagine). N-linked (GlcNAc...) asparagine glycosylation occurs at N1809. Positions 1975-2190 (GLLYPFPKDC…FAEMKLRPSN (216 aa)) constitute a Fibrinogen C-terminal domain. N2162 is a glycosylation site (N-linked (GlcNAc...) asparagine).

This sequence belongs to the tenascin family. In terms of assembly, homohexamer; disulfide-linked. A homotrimer may be formed in the triple coiled-coil region and may be stabilized by disulfide rings at both ends. Two of such half-hexabrachions may be disulfide linked within the central globule. Interacts with CSPG4. Interacts (via the 3rd fibronectin type-III domain) with integrin ITGA9:ITGB1. In terms of tissue distribution, detected in fibroblasts (at protein level).

The protein localises to the secreted. It localises to the extracellular space. It is found in the extracellular matrix. Extracellular matrix protein implicated in guidance of migrating neurons as well as axons during development, synaptic plasticity as well as neuronal regeneration. Promotes neurite outgrowth from cortical neurons grown on a monolayer of astrocytes. Ligand for integrins alpha-8/beta-1, alpha-9/beta-1, alpha-V/beta-3 and alpha-V/beta-6. In tumors, stimulates angiogenesis by elongation, migration and sprouting of endothelial cells. The chain is Tenascin (TNC) from Homo sapiens (Human).